The chain runs to 238 residues: Acyl-protein thioesterase 1 (238 aa).

Active-site charge relay system residues include Ser-120, Asp-174, and His-219.

Belongs to the AB hydrolase superfamily. AB hydrolase 2 family.

The protein localises to the cytoplasm. It localises to the nucleus. It carries out the reaction S-hexadecanoyl-L-cysteinyl-[protein] + H2O = L-cysteinyl-[protein] + hexadecanoate + H(+). In terms of biological role, hydrolyzes fatty acids from S-acylated cysteine residues in proteins with a strong preference for palmitoylated G-alpha proteins over other acyl substrates. Mediates the deacylation of G-alpha proteins such as GPA1 in vivo, but has weak or no activity toward palmitoylated Ras proteins. Has weak lysophospholipase activity in vitro; however such activity may not exist in vivo. The chain is Acyl-protein thioesterase 1 from Cryptococcus neoformans var. neoformans serotype D (strain B-3501A) (Filobasidiella neoformans).